We begin with the raw amino-acid sequence, 267 residues long: tRNA-cytidine(32) 2-sulfurtransferase 1 (267 aa).

The PP-loop motif signature appears at 42–47 (SGGKDS). The [4Fe-4S] cluster site is built by Cys117, Cys120, and Cys208.

Belongs to the TtcA family. Homodimer. It depends on Mg(2+) as a cofactor. [4Fe-4S] cluster is required as a cofactor.

It localises to the cytoplasm. The enzyme catalyses cytidine(32) in tRNA + S-sulfanyl-L-cysteinyl-[cysteine desulfurase] + AH2 + ATP = 2-thiocytidine(32) in tRNA + L-cysteinyl-[cysteine desulfurase] + A + AMP + diphosphate + H(+). It participates in tRNA modification. Functionally, catalyzes the ATP-dependent 2-thiolation of cytidine in position 32 of tRNA, to form 2-thiocytidine (s(2)C32). The sulfur atoms are provided by the cysteine/cysteine desulfurase (IscS) system. This is tRNA-cytidine(32) 2-sulfurtransferase 1 from Francisella tularensis subsp. novicida (strain U112).